We begin with the raw amino-acid sequence, 173 residues long: Alpha-crystallin A chain (173 aa).

Residue Met1 is modified to N-acetylmethionine. Positions 1–63 are required for complex formation with BFSP1 and BFSP2; during homooligomerization, mediates the association of 2 dimers to form a tetramer; sequence MDVTIQHPWF…RTVLDSGISE (63 aa). Position 6 is a deamidated glutamine; partial (Gln6). Ser45 bears the Phosphoserine mark. Deamidated glutamine; partial is present on Gln50. Positions 52 to 164 constitute a sHSP domain; the sequence is LFRTVLDSGI…AERAIPVSRE (113 aa). At Lys70 the chain carries N6-acetyllysine. Gln90 is subject to Deamidated glutamine; partial. At Lys99 the chain carries N6-acetyllysine. His100 provides a ligand contact to Zn(2+). Residue Asn101 is modified to Deamidated asparagine; partial. Zn(2+) contacts are provided by Glu102 and His107. Ser122 is modified (phosphoserine). Position 123 is a deamidated asparagine; partial (Asn123). A disulfide bridge connects residues Cys131 and Cys142. Gln147 bears the Deamidated glutamine; partial mark. A Zn(2+)-binding site is contributed by His154. The O-linked (GlcNAc) serine glycan is linked to Ser162.

It belongs to the small heat shock protein (HSP20) family. As to quaternary structure, heteropolymer composed of three CRYAA and one CRYAB subunits. Inter-subunit bridging via zinc ions enhances stability, which is crucial as there is no protein turn over in the lens. Can also form homodimers and homotetramers (dimers of dimers) which serve as the building blocks of homooligomers. Within homooligomers, the zinc-binding motif is created from residues of 3 different molecules. His-100 and Glu-102 from one molecule are ligands of the zinc ion, and His-107 and His-154 residues from additional molecules complete the site with tetrahedral coordination geometry. Part of a complex required for lens intermediate filament formation composed of BFSP1, BFSP2 and CRYAA. In terms of processing, O-glycosylated; contains N-acetylglucosamine side chains. Post-translationally, deamidation of Asn-101 in lens occurs mostly during the first 30 years of age, followed by a small additional amount of deamidation (approximately 5%) during the next approximately 38 years, resulting in a maximum of approximately 50% deamidation during the lifetime of the individual. Phosphorylation on Ser-122 seems to be developmentally regulated. Absent in the first months of life, it appears during the first 12 years of human lifetime. The relative amount of phosphorylated form versus unphosphorylated form does not change over the lifetime of the individual. In terms of processing, acetylation at Lys-70 may increase chaperone activity. Post-translationally, undergoes age-dependent proteolytical cleavage at the C-terminus. Alpha-crystallin A(1-172) is the most predominant form produced most rapidly during the first 12 years of age and after this age is present in approximately 50% of the lens molecules. In young individuals and during the first approximately 30 years of life, less than half molecules contain an intramolecular disulfide bond (oxidized form), while in the remaining fraction the cysteines are in the free sulfhydryl form (reduced form). With aging, the amount of oxidized form increases up to 90% and it becomes a major constituent of high molecular weight aggregates, concomitant with an age-dependent loss of its chaperone activity. The reduced form is undetectable in cataractous lenses. In terms of tissue distribution, expressed in the eye lens (at protein level).

It localises to the cytoplasm. The protein resides in the nucleus. Its function is as follows. Contributes to the transparency and refractive index of the lens. In its oxidized form (absence of intramolecular disulfide bond), acts as a chaperone, preventing aggregation of various proteins under a wide range of stress conditions. Required for the correct formation of lens intermediate filaments as part of a complex composed of BFSP1, BFSP2 and CRYAA. The protein is Alpha-crystallin A chain (CRYAA) of Homo sapiens (Human).